A 783-amino-acid polypeptide reads, in one-letter code: Tripartite motif-containing protein 67 (783 aa).

The RING-type; degenerate zinc finger occupies C7–E42. Residues A206–P253 form a B box-type 1; degenerate zinc finger. The interval K247–S295 is disordered. Positions Q252–A261 are enriched in pro residues. Positions P275–G293 are enriched in gly residues. A B box-type 2 zinc finger spans residues R298 to L340. Zn(2+) is bound by residues C303, H306, C326, and H332. Positions K345–N382 form a coiled coil. In terms of domain architecture, COS spans I448–I506. Positions P513 to V607 constitute a Fibronectin type-III domain. Residues N589–L780 enclose the B30.2/SPRY domain.

It belongs to the TRIM/RBCC family.

The protein localises to the cytoplasm. It is found in the cytoskeleton. This is Tripartite motif-containing protein 67 (TRIM67) from Homo sapiens (Human).